The chain runs to 235 residues: NAD(P)H-hydrate epimerase (235 aa).

Residues 18 to 221 enclose the YjeF N-terminal domain; the sequence is AAQIDEQLFT…SLVDEHELLM (204 aa). Position 65-69 (65-69) interacts with (6S)-NADPHX; it reads NNGGD. Residues asparagine 66 and aspartate 127 each contribute to the K(+) site. Residues 131-137 and aspartate 160 contribute to the (6S)-NADPHX site; that span reads GFSFHPP. Serine 163 lines the K(+) pocket.

Belongs to the NnrE/AIBP family. It depends on K(+) as a cofactor.

The enzyme catalyses (6R)-NADHX = (6S)-NADHX. It carries out the reaction (6R)-NADPHX = (6S)-NADPHX. In terms of biological role, catalyzes the epimerization of the S- and R-forms of NAD(P)HX, a damaged form of NAD(P)H that is a result of enzymatic or heat-dependent hydration. This is a prerequisite for the S-specific NAD(P)H-hydrate dehydratase to allow the repair of both epimers of NAD(P)HX. This Caenorhabditis elegans protein is NAD(P)H-hydrate epimerase.